We begin with the raw amino-acid sequence, 118 residues long: Putative pterin-4-alpha-carbinolamine dehydratase (118 aa).

The protein belongs to the pterin-4-alpha-carbinolamine dehydratase family.

It carries out the reaction (4aS,6R)-4a-hydroxy-L-erythro-5,6,7,8-tetrahydrobiopterin = (6R)-L-erythro-6,7-dihydrobiopterin + H2O. This chain is Putative pterin-4-alpha-carbinolamine dehydratase, found in Xanthomonas campestris pv. campestris (strain B100).